Reading from the N-terminus, the 391-residue chain is Shewanella-like protein phosphatase 2 (391 aa).

4 residues coordinate Mn(2+): Asp61, His63, Asp97, and Asn132. His133 acts as the Proton donor in catalysis. His232 and His295 together coordinate Mn(2+).

The protein belongs to the metallophosphoesterase superfamily. SLP family. It depends on Mn(2+) as a cofactor. Expressed in roots and siliques (at protein level).

It localises to the cytoplasm. The protein localises to the cytosol. Functionally, shows phosphatase activity, hydrolyzing the artificial substrate para-nitrophenylphosphate (pNPP) in vitro. This is Shewanella-like protein phosphatase 2 from Arabidopsis thaliana (Mouse-ear cress).